The primary structure comprises 375 residues: ATP-sensitive inward rectifier potassium channel 15 (375 aa).

At 1-60 the chain is on the cytoplasmic side; it reads MDAIHIGMSSTPLVKHTAGAGLKANRPRVMSKSGHSNVRIDKVDGIYLLYLQDLWTTVID. The helical transmembrane segment at 61–87 threads the bilayer; that stretch reads MKWRYKLTLFAATFVMTWFLFGVIYYA. The Extracellular segment spans residues 88–113; sequence IAFIHGDLEPGEPISNHTPCIMKVDS. The helical; Pore-forming intramembrane region spans 114-130; it reads LTGAFLFSLESQTTIGY. The Selectivity filter signature appears at 127–132; it reads TIGYGV. Topologically, residues 131–139 are extracellular; it reads GVRSITEEC. Residues 140 to 165 traverse the membrane as a helical segment; sequence PHAIFLLVAQLVITTLIEIFITGTFL. At 166–375 the chain is on the cytoplasmic side; the sequence is AKIARPKKRA…RTLLLQQSNV (210 aa).

It belongs to the inward rectifier-type potassium channel (TC 1.A.2.1) family. KCNJ15 subfamily. As to quaternary structure, can form heteromultimeric channels with Kir5.1/KCNJ16. Interacts with PATJ.

The protein resides in the membrane. Its subcellular location is the cell membrane. It carries out the reaction K(+)(in) = K(+)(out). Channel activity is regulated by variations of cytosolic pH; reversibly inhibited by acidic pH values. Inhibited by Ba(2+) and Cs(+) in a voltage-dependent manner. Its function is as follows. Inward rectifier potassium channels are characterized by a greater tendency to allow potassium to flow into the cell rather than out of it. Their voltage dependence is regulated by the concentration of extracellular potassium; as external potassium is raised, the voltage range of the channel opening shifts to more positive voltages. The inward rectification is mainly due to the blockage of outward current by internal magnesium. In Homo sapiens (Human), this protein is ATP-sensitive inward rectifier potassium channel 15 (KCNJ15).